The chain runs to 427 residues: UDP-N-acetyl-D-mannosamine dehydrogenase (427 aa).

Positions 19, 20, 39, 44, 91, and 130 each coordinate NAD(+). UDP-N-acetyl-alpha-D-mannosaminouronate is bound by residues Arg-155, Val-156, Lys-207, Asn-211, Arg-214, His-245, Arg-247, and Gly-258. Residue Lys-207 is the Proton donor/acceptor of the active site. Cys-261 (nucleophile) is an active-site residue. Residues Tyr-318 and Lys-319 each contribute to the UDP-N-acetyl-alpha-D-mannosaminouronate site. Arg-326 is an NAD(+) binding site. Lys-404 contacts UDP-N-acetyl-alpha-D-mannosaminouronate.

It belongs to the UDP-glucose/GDP-mannose dehydrogenase family. As to quaternary structure, homotetramer; probably dimer of dimers.

The enzyme catalyses UDP-N-acetyl-alpha-D-mannosamine + 2 NAD(+) + H2O = UDP-N-acetyl-alpha-D-mannosaminouronate + 2 NADH + 3 H(+). Functionally, catalyzes the four-electron oxidation of UDP-N-acetyl-D-mannosamine (UDP-ManNAc), reducing NAD(+) and releasing UDP-N-acetylmannosaminuronic acid (UDP-ManNAcA). Cannot use NADP instead of NAD. The chain is UDP-N-acetyl-D-mannosamine dehydrogenase (wecC) from Methanococcus maripaludis (strain DSM 14266 / JCM 13030 / NBRC 101832 / S2 / LL).